The chain runs to 217 residues: tRNA (guanine-N(7)-)-methyltransferase (217 aa).

Glutamate 44, aspartate 69, aspartate 96, and aspartate 118 together coordinate S-adenosyl-L-methionine. Residue aspartate 118 is part of the active site. Residue lysine 122 coordinates substrate. The tract at residues 124 to 129 (RHEKRR) is interaction with RNA. Substrate is bound by residues aspartate 154 and 193–196 (TEYE).

This sequence belongs to the class I-like SAM-binding methyltransferase superfamily. TrmB family.

It carries out the reaction guanosine(46) in tRNA + S-adenosyl-L-methionine = N(7)-methylguanosine(46) in tRNA + S-adenosyl-L-homocysteine. The protein operates within tRNA modification; N(7)-methylguanine-tRNA biosynthesis. Functionally, catalyzes the formation of N(7)-methylguanine at position 46 (m7G46) in tRNA. The chain is tRNA (guanine-N(7)-)-methyltransferase from Lactococcus lactis subsp. cremoris (strain SK11).